Here is an 874-residue protein sequence, read N- to C-terminus: Alanine--tRNA ligase (874 aa).

Positions 564, 568, 665, and 669 each coordinate Zn(2+).

It belongs to the class-II aminoacyl-tRNA synthetase family. Requires Zn(2+) as cofactor.

It is found in the cytoplasm. The catalysed reaction is tRNA(Ala) + L-alanine + ATP = L-alanyl-tRNA(Ala) + AMP + diphosphate. Its function is as follows. Catalyzes the attachment of alanine to tRNA(Ala) in a two-step reaction: alanine is first activated by ATP to form Ala-AMP and then transferred to the acceptor end of tRNA(Ala). Also edits incorrectly charged Ser-tRNA(Ala) and Gly-tRNA(Ala) via its editing domain. The protein is Alanine--tRNA ligase of Burkholderia mallei (strain ATCC 23344).